The following is a 436-amino-acid chain: Xylose isomerase (436 aa).

Residues Asp-306 and Asp-308 each contribute to the Mg(2+) site.

Belongs to the xylose isomerase family. In terms of assembly, homotetramer. Mg(2+) is required as a cofactor.

The protein resides in the cytoplasm. It carries out the reaction alpha-D-xylose = alpha-D-xylulofuranose. This is Xylose isomerase from Rhizobium rhizogenes (strain K84 / ATCC BAA-868) (Agrobacterium radiobacter).